A 328-amino-acid polypeptide reads, in one-letter code: Reticulocalbin-3 (328 aa).

The signal sequence occupies residues 1 to 20 (MMWRWTLMLLLLLLRHWALG). Positions 24–48 (PDAGPHGQDRVHHGTPLSEAPHDDA) are disordered. 6 consecutive EF-hand domains span residues 75–112 (ESQA…TQQR), 113–148 (HIRD…HYEP), 163–198 (KMLA…EEFP), 200–235 (MRDI…AEPG), 241–276 (WVQT…PSQD), and 277–312 (QPLV…FVGS). Ca(2+)-binding residues include D92, D94, W96, E101, D126, D128, D130, R132, and E137. N140 carries an N-linked (GlcNAc...) asparagine glycan. Ca(2+) contacts are provided by D176, D178, D180, M182, E187, D213, N215, D217, Y219, E224, D254, N256, D258, R260, E265, D290, D292, D294, R296, and E301. The Prevents secretion from ER signature appears at 325-328 (HDEL).

The protein belongs to the CREC family. In terms of assembly, interacts with PCSK6 (immature form including the propeptide); probably involved in the maturation and the secretion of PCSK6. N-glycosylated. Post-translationally, degraded by PCSK6 and other endoproteases including FURIN and PCSK5.

Its subcellular location is the endoplasmic reticulum lumen. In terms of biological role, probable molecular chaperone assisting protein biosynthesis and transport in the endoplasmic reticulum. Required for the proper biosynthesis and transport of pulmonary surfactant-associated protein A/SP-A, pulmonary surfactant-associated protein D/SP-D and the lipid transporter ABCA3. By regulating both the proper expression and the degradation through the endoplasmic reticulum-associated protein degradation pathway of these proteins plays a crucial role in pulmonary surfactant homeostasis. Has an anti-fibrotic activity by negatively regulating the secretion of type I and type III collagens. This calcium-binding protein also transiently associates with immature PCSK6 and regulates its secretion. The chain is Reticulocalbin-3 from Rattus norvegicus (Rat).